The sequence spans 230 residues: Ly6/PLAUR domain-containing protein 8 (230 aa).

The signal sequence occupies residues 1-20 (MKSFLFAGIVVVLTVAAVDT). N37, N44, N74, N77, N90, N106, N110, N132, N137, N156, N168, N181, and N197 each carry an N-linked (GlcNAc...) asparagine glycan. In terms of domain architecture, UPAR/Ly6 spans 125–172 (CPACYGNNETSCNETRKCYGERCVSIIAEFTNETKTLVLKGCSNVSIS). S211 carries GPI-anchor amidated serine lipidation. Residues 212-230 (QASFTPLALASILLLSLLL) constitute a propeptide, removed in mature form.

Belongs to the CNF-like-inhibitor family. In terms of processing, highly N-glycosylated. Not O-glycosylated. GPI-anchored. The GPI-anchor is cleaved, leading to secretion into the colonic lumen.

The protein resides in the cell membrane. Its subcellular location is the secreted. Functionally, secreted protein specifically required to prevent invasion of Gram-negative bacteria in the inner mucus layer of the colon epithelium, a portion of the large intestine which is free of commensal microbiota. Prevents invasion of flagellated microbiota by binding to the flagellum of bacteria, such as P.mirabilis, thereby inhibiting bacterial motility in the intestinal lumen. Segregation of intestinal bacteria and epithelial cells in the colon is required to preserve intestinal homeostasis. The polypeptide is Ly6/PLAUR domain-containing protein 8 (LYPD8) (Bos taurus (Bovine)).